A 165-amino-acid polypeptide reads, in one-letter code: Phosphopantetheine adenylyltransferase (165 aa).

Position 9 (Thr-9) interacts with substrate. Residues 9–10 (TF) and His-17 each bind ATP. Residues Lys-41, Leu-73, and Arg-87 each coordinate substrate. ATP-binding positions include 88 to 90 (GLR), Glu-98, and 123 to 129 (YQFISGT).

The protein belongs to the bacterial CoaD family. As to quaternary structure, homohexamer. Mg(2+) serves as cofactor.

Its subcellular location is the cytoplasm. The enzyme catalyses (R)-4'-phosphopantetheine + ATP + H(+) = 3'-dephospho-CoA + diphosphate. The protein operates within cofactor biosynthesis; coenzyme A biosynthesis; CoA from (R)-pantothenate: step 4/5. In terms of biological role, reversibly transfers an adenylyl group from ATP to 4'-phosphopantetheine, yielding dephospho-CoA (dPCoA) and pyrophosphate. The polypeptide is Phosphopantetheine adenylyltransferase (Burkholderia orbicola (strain MC0-3)).